The following is a 217-amino-acid chain: dITP/XTP pyrophosphatase (217 aa).

Residue 7–12 (SRNKKK) participates in substrate binding. Catalysis depends on aspartate 72, which acts as the Proton acceptor. Residue aspartate 72 participates in Mg(2+) binding. Substrate contacts are provided by residues serine 73, 163 to 166 (FGYD), lysine 195, and 200 to 201 (HR).

It belongs to the HAM1 NTPase family. Homodimer. It depends on Mg(2+) as a cofactor.

It catalyses the reaction XTP + H2O = XMP + diphosphate + H(+). The catalysed reaction is dITP + H2O = dIMP + diphosphate + H(+). The enzyme catalyses ITP + H2O = IMP + diphosphate + H(+). Its function is as follows. Pyrophosphatase that catalyzes the hydrolysis of nucleoside triphosphates to their monophosphate derivatives, with a high preference for the non-canonical purine nucleotides XTP (xanthosine triphosphate), dITP (deoxyinosine triphosphate) and ITP. Seems to function as a house-cleaning enzyme that removes non-canonical purine nucleotides from the nucleotide pool, thus preventing their incorporation into DNA/RNA and avoiding chromosomal lesions. The sequence is that of dITP/XTP pyrophosphatase from Corynebacterium jeikeium (strain K411).